The sequence spans 400 residues: MERNISVEELNQIPTPKKEVEIVERKGIGHPDSVADGIAEAVSRSLSKYYLEHYGRILHHNTDQVEVVGGQSAPKYGGGLVLEPTYILLSGRATTKVGNDRVPYKSITIKAAKDYLRNNFSHLDVDADVMIDSRIGQGSVDLVEVYDTSKLEANDTSFGVGFAPLSETENIVLKTERYLNGSLKKKLPMVGYDIKVMGFRQKDTINLTVAAAFVDKYIKDADEYFNLKDQLKDLVLDNAVEETDKEVKVYINTADIRENSKSVGYLTVTGMSMENGDDGSVGRGNRVNGLITPYRAMSMEAAAGKNPVTHVGKLYNVLANKIANDIVQEEGNDIAEVLVRIVSQIGRPIDDPHVASVQVIYEGNVDHSKHKNNIRNLVNDRLAHVSDLTMQFVEGKITVF.

ATP is bound at residue 136–141 (GQGSVD).

It belongs to the AdoMet synthase 2 family. Mg(2+) is required as a cofactor.

It catalyses the reaction L-methionine + ATP + H2O = S-adenosyl-L-methionine + phosphate + diphosphate. Its pathway is amino-acid biosynthesis; S-adenosyl-L-methionine biosynthesis; S-adenosyl-L-methionine from L-methionine: step 1/1. Its function is as follows. Catalyzes the formation of S-adenosylmethionine from methionine and ATP. This chain is S-adenosylmethionine synthase, found in Thermoplasma volcanium (strain ATCC 51530 / DSM 4299 / JCM 9571 / NBRC 15438 / GSS1).